A 262-amino-acid polypeptide reads, in one-letter code: Acyl-[acyl-carrier-protein]--UDP-N-acetylglucosamine O-acyltransferase (262 aa).

The protein belongs to the transferase hexapeptide repeat family. LpxA subfamily. Homotrimer.

Its subcellular location is the cytoplasm. The catalysed reaction is a (3R)-hydroxyacyl-[ACP] + UDP-N-acetyl-alpha-D-glucosamine = a UDP-3-O-[(3R)-3-hydroxyacyl]-N-acetyl-alpha-D-glucosamine + holo-[ACP]. The protein operates within glycolipid biosynthesis; lipid IV(A) biosynthesis; lipid IV(A) from (3R)-3-hydroxytetradecanoyl-[acyl-carrier-protein] and UDP-N-acetyl-alpha-D-glucosamine: step 1/6. Involved in the biosynthesis of lipid A, a phosphorylated glycolipid that anchors the lipopolysaccharide to the outer membrane of the cell. This Salmonella paratyphi B (strain ATCC BAA-1250 / SPB7) protein is Acyl-[acyl-carrier-protein]--UDP-N-acetylglucosamine O-acyltransferase.